The primary structure comprises 336 residues: N-acetyl-gamma-glutamyl-phosphate reductase (336 aa).

The active site involves Cys144.

Belongs to the NAGSA dehydrogenase family. Type 1 subfamily.

The protein resides in the cytoplasm. It catalyses the reaction N-acetyl-L-glutamate 5-semialdehyde + phosphate + NADP(+) = N-acetyl-L-glutamyl 5-phosphate + NADPH + H(+). It participates in amino-acid biosynthesis; L-arginine biosynthesis; N(2)-acetyl-L-ornithine from L-glutamate: step 3/4. In terms of biological role, catalyzes the NADPH-dependent reduction of N-acetyl-5-glutamyl phosphate to yield N-acetyl-L-glutamate 5-semialdehyde. This is N-acetyl-gamma-glutamyl-phosphate reductase from Methanosarcina acetivorans (strain ATCC 35395 / DSM 2834 / JCM 12185 / C2A).